We begin with the raw amino-acid sequence, 153 residues long: 6,7-dimethyl-8-ribityllumazine synthase (153 aa).

5-amino-6-(D-ribitylamino)uracil is bound by residues F22, A56–E58, and T80–I82. S85–T86 contributes to the (2S)-2-hydroxy-3-oxobutyl phosphate binding site. H88 acts as the Proton donor in catalysis. F113 is a 5-amino-6-(D-ribitylamino)uracil binding site. Residue R127 coordinates (2S)-2-hydroxy-3-oxobutyl phosphate.

This sequence belongs to the DMRL synthase family. Forms an icosahedral capsid composed of 60 subunits, arranged as a dodecamer of pentamers.

It catalyses the reaction (2S)-2-hydroxy-3-oxobutyl phosphate + 5-amino-6-(D-ribitylamino)uracil = 6,7-dimethyl-8-(1-D-ribityl)lumazine + phosphate + 2 H2O + H(+). It functions in the pathway cofactor biosynthesis; riboflavin biosynthesis; riboflavin from 2-hydroxy-3-oxobutyl phosphate and 5-amino-6-(D-ribitylamino)uracil: step 1/2. In terms of biological role, catalyzes the formation of 6,7-dimethyl-8-ribityllumazine by condensation of 5-amino-6-(D-ribitylamino)uracil with 3,4-dihydroxy-2-butanone 4-phosphate. This is the penultimate step in the biosynthesis of riboflavin. The chain is 6,7-dimethyl-8-ribityllumazine synthase from Actinobacillus pleuropneumoniae serotype 3 (strain JL03).